A 568-amino-acid chain; its full sequence is Envelope glycoprotein E (568 aa).

A signal peptide spans 1-20 (MMPATLAGLALAVTVATMFA). The Virion surface portion of the chain corresponds to 21-422 (QRVDSTTIHH…GGGPGNSKRR (402 aa)). N88, N179, and N248 each carry an N-linked (GlcNAc...) asparagine; by host glycan. A disulfide bridge links C271 with C280. The helical transmembrane segment at 423 to 443 (AAVLGAAVWIALTLLILGGLG) threads the bilayer. Over 444 to 568 (AYVAVNKKCL…ANKTFPSQRY (125 aa)) the chain is Intravirion. The Internalization motif motif lies at 465 to 468 (KPTL). A disordered region spans residues 470 to 534 (THAHTYTSLP…SRRNSFGPTL (65 aa)). Residues 482–497 (GDLSLEQDAEDEDEDE) are acidic. The segment covering 486 to 500 (LEQDAEDEDEDEEEL) has biased composition (acidic residues). A compositionally biased stretch (basic residues) spans 515–526 (KSSRSPSRRSSR).

The protein belongs to the alphaherpesvirinae glycoprotein E family. As to quaternary structure, interacts with gI. Phosphorylated on serines within the acidic cluster. Phosphorylation determines whether endocytosed viral gE traffics to the trans-Golgi network or recycles to the cell membrane.

It is found in the virion membrane. It localises to the host cell membrane. The protein localises to the host cell junction. The protein resides in the host Golgi apparatus membrane. Its subcellular location is the host endosome membrane. Its function is as follows. In epithelial cells, the heterodimer gE/gI is required for the cell-to-cell spread of the virus, by sorting nascent virions to cell junctions. Once the virus reaches the cell junctions, virus particles can spread to adjacent cells extremely rapidly through interactions with cellular receptors that accumulate at these junctions. Implicated in basolateral spread in polarized cells. In neuronal cells, gE/gI is essential for the anterograde spread of the infection throughout the host nervous system. Together with US9, the heterodimer gE/gI is involved in the sorting and transport of viral structural components toward axon tips. The protein is Envelope glycoprotein E (US8) of Psittacid herpesvirus 1 (isolate Amazon parrot/-/97-0001/1997) (PsHV-1).